The following is a 1385-amino-acid chain: Pesticidal crystal protein Cry5Aa (1385 aa).

Disordered regions lie at residues 768–799 (NITV…GQYN) and 1359–1385 (PLPT…NNNQ). A compositionally biased stretch (gly residues) spans 782–796 (NGGGDGGGNGGGDGG). Residues 1370–1385 (NTASSTNSDTSMNNNQ) are compositionally biased toward low complexity.

The protein belongs to the delta endotoxin family.

Its function is as follows. Endotoxin with nematicidal activity. In Bacillus thuringiensis subsp. darmstadiensis, this protein is Pesticidal crystal protein Cry5Aa (cry5Aa).